We begin with the raw amino-acid sequence, 121 residues long: Large ribosomal subunit protein uL22 (121 aa).

This sequence belongs to the universal ribosomal protein uL22 family. In terms of assembly, part of the 50S ribosomal subunit.

Its function is as follows. This protein binds specifically to 23S rRNA; its binding is stimulated by other ribosomal proteins, e.g. L4, L17, and L20. It is important during the early stages of 50S assembly. It makes multiple contacts with different domains of the 23S rRNA in the assembled 50S subunit and ribosome. The globular domain of the protein is located near the polypeptide exit tunnel on the outside of the subunit, while an extended beta-hairpin is found that lines the wall of the exit tunnel in the center of the 70S ribosome. In Micrococcus luteus (strain ATCC 4698 / DSM 20030 / JCM 1464 / CCM 169 / CCUG 5858 / IAM 1056 / NBRC 3333 / NCIMB 9278 / NCTC 2665 / VKM Ac-2230) (Micrococcus lysodeikticus), this protein is Large ribosomal subunit protein uL22.